The following is a 375-amino-acid chain: Alcohol dehydrogenase 1 (375 aa).

An N-acetylserine modification is found at Ser2. Zn(2+)-binding residues include Cys47, His68, Cys98, Cys101, Cys104, Cys112, and Cys175. Residues 200 to 205 (GLGGVG), Asp224, and Lys229 each bind NAD(+). Lys234 is subject to N6-succinyllysine. 293–295 (VGV) lines the NAD(+) pocket. N6-succinyllysine is present on Lys340. Arg370 is an NAD(+) binding site.

The protein belongs to the zinc-containing alcohol dehydrogenase family. In terms of assembly, homodimer. It depends on Zn(2+) as a cofactor.

The protein localises to the cytoplasm. The enzyme catalyses a primary alcohol + NAD(+) = an aldehyde + NADH + H(+). It carries out the reaction a secondary alcohol + NAD(+) = a ketone + NADH + H(+). This Oryctolagus cuniculus (Rabbit) protein is Alcohol dehydrogenase 1 (ADH1).